Reading from the N-terminus, the 186-residue chain is Photosystem I assembly protein Ycf4 (186 aa).

Helical transmembrane passes span 26–46 and 66–86; these read WATI…SSYF and IVMT…WLTI.

The protein belongs to the Ycf4 family.

It is found in the plastid. The protein resides in the chloroplast thylakoid membrane. Its function is as follows. Seems to be required for the assembly of the photosystem I complex. This chain is Photosystem I assembly protein Ycf4, found in Pyropia yezoensis (Susabi-nori).